Here is a 923-residue protein sequence, read N- to C-terminus: RNA polymerase-associated protein RapA (923 aa).

One can recognise a Helicase ATP-binding domain in the interval 162–332; it reads EVGNRVNPRV…FARLRLLDPE (171 aa). 175-182 contacts ATP; the sequence is DEVGLGKT. The short motif at 278–281 is the DEAH box element; the sequence is DEAH. In terms of domain architecture, Helicase C-terminal spans 443–597; it reads KIDWLIDFLK…TCPMGMALFS (155 aa).

It belongs to the SNF2/RAD54 helicase family. RapA subfamily. In terms of assembly, interacts with the RNAP. Has a higher affinity for the core RNAP than for the holoenzyme. Its ATPase activity is stimulated by binding to RNAP.

Functionally, transcription regulator that activates transcription by stimulating RNA polymerase (RNAP) recycling in case of stress conditions such as supercoiled DNA or high salt concentrations. Probably acts by releasing the RNAP, when it is trapped or immobilized on tightly supercoiled DNA. Does not activate transcription on linear DNA. Probably not involved in DNA repair. In Haemophilus influenzae (strain ATCC 51907 / DSM 11121 / KW20 / Rd), this protein is RNA polymerase-associated protein RapA.